The sequence spans 236 residues: MTVNALLLSSSRVGDTPYLSHAIPFIKPLTADAQKWIFIPYAGVSMNYDTYLASVVTGLSELKLDISGIHQHPDPRQALKDADGILIGGGNTFHLLHELYKYDLVQLIREEVLKGKPYIGWSAGSNVSGLSIRTTNDMPIIEPPSFAALNILPFQLNPHYSNYRAPGHNGETRAQRLLEFTRVDPITPVIGIVEGSALWRQGETLSLLGENPAYLFCGEQQEIPIPVGSDLSHLLK.

Residues S122, D137, and H159 each act as charge relay system in the active site.

This sequence belongs to the peptidase S51 family.

It localises to the cytoplasm. The catalysed reaction is Dipeptidase E catalyzes the hydrolysis of dipeptides Asp-|-Xaa. It does not act on peptides with N-terminal Glu, Asn or Gln, nor does it cleave isoaspartyl peptides.. Its function is as follows. Hydrolyzes dipeptides containing N-terminal aspartate residues. May play a role in allowing the cell to use peptide aspartate to spare carbon otherwise required for the synthesis of the aspartate family of amino acids. The sequence is that of Peptidase E from Shewanella oneidensis (strain ATCC 700550 / JCM 31522 / CIP 106686 / LMG 19005 / NCIMB 14063 / MR-1).